We begin with the raw amino-acid sequence, 343 residues long: Farnesyl pyrophosphate synthase (343 aa).

Isopentenyl diphosphate is bound by residues lysine 49, arginine 52, and glutamine 87. Mg(2+) is bound by residues aspartate 94 and aspartate 98. A dimethylallyl diphosphate-binding site is contributed by arginine 103. Arginine 104 contributes to the isopentenyl diphosphate binding site. Residues lysine 191, threonine 192, glutamine 230, lysine 247, and lysine 256 each coordinate dimethylallyl diphosphate.

This sequence belongs to the FPP/GGPP synthase family. It depends on Mg(2+) as a cofactor. As to expression, expressed both in apical and sub-apical cells of glandular secretory trichomes.

The protein resides in the cytoplasm. Its subcellular location is the nucleus. It catalyses the reaction isopentenyl diphosphate + dimethylallyl diphosphate = (2E)-geranyl diphosphate + diphosphate. It carries out the reaction isopentenyl diphosphate + (2E)-geranyl diphosphate = (2E,6E)-farnesyl diphosphate + diphosphate. The protein operates within isoprenoid biosynthesis; farnesyl diphosphate biosynthesis; farnesyl diphosphate from geranyl diphosphate and isopentenyl diphosphate: step 1/1. It participates in sesquiterpene biosynthesis. It functions in the pathway isoprenoid biosynthesis; geranyl diphosphate biosynthesis; geranyl diphosphate from dimethylallyl diphosphate and isopentenyl diphosphate: step 1/1. Its function is as follows. Involved in the biosynthesis of the antimalarial endoperoxide artemisinin. Catalyzes the sequential condensation of isopentenyl pyrophosphate with the allylic pyrophosphates, dimethylallyl pyrophosphate, and then with the resultant geranylpyrophosphate to the ultimate product farnesyl pyrophosphate. Promotes anti-malarial and antimicrobial (toward Gram-positive bacteria B.subtilis and S.aureus) activities of plant crude extract probably by triggering artemisinin levels. This is Farnesyl pyrophosphate synthase from Artemisia annua (Sweet wormwood).